The following is a 113-amino-acid chain: uncharacterized protein (113 aa).

The first 20 residues, 1 to 20 (MMKKSILAFLLLTSSAAALA), serve as a signal peptide directing secretion.

This is an uncharacterized protein from Escherichia coli (strain K12).